Reading from the N-terminus, the 333-residue chain is Adenosine deaminase (333 aa).

The Zn(2+) site is built by H12 and H14. Substrate is bound by residues H14, D16, and G170. Residue H197 coordinates Zn(2+). E200 serves as the catalytic Proton donor. D278 is a Zn(2+) binding site. D279 contacts substrate.

The protein belongs to the metallo-dependent hydrolases superfamily. Adenosine and AMP deaminases family. Adenosine deaminase subfamily. The cofactor is Zn(2+).

The enzyme catalyses adenosine + H2O + H(+) = inosine + NH4(+). It catalyses the reaction 2'-deoxyadenosine + H2O + H(+) = 2'-deoxyinosine + NH4(+). Its function is as follows. Catalyzes the hydrolytic deamination of adenosine and 2-deoxyadenosine. This chain is Adenosine deaminase, found in Escherichia coli O7:K1 (strain IAI39 / ExPEC).